A 574-amino-acid polypeptide reads, in one-letter code: Isocitrate dehydrogenase kinase/phosphatase (574 aa).

ATP is bound by residues 315-321 and lysine 336; that span reads APGIRGM. The active site involves aspartate 371.

This sequence belongs to the AceK family.

It is found in the cytoplasm. It catalyses the reaction L-seryl-[isocitrate dehydrogenase] + ATP = O-phospho-L-seryl-[isocitrate dehydrogenase] + ADP + H(+). Bifunctional enzyme which can phosphorylate or dephosphorylate isocitrate dehydrogenase (IDH) on a specific serine residue. This is a regulatory mechanism which enables bacteria to bypass the Krebs cycle via the glyoxylate shunt in response to the source of carbon. When bacteria are grown on glucose, IDH is fully active and unphosphorylated, but when grown on acetate or ethanol, the activity of IDH declines drastically concomitant with its phosphorylation. This Escherichia coli O81 (strain ED1a) protein is Isocitrate dehydrogenase kinase/phosphatase.